Consider the following 244-residue polypeptide: Extracellular superoxide dismutase [Cu-Zn] (244 aa).

Positions 1-18 are cleaved as a signal peptide; it reads MLALVCSCLLLAALPADT. Disulfide bonds link C67–C212 and C129–C211. Residue N111 is glycosylated (N-linked (GlcNAc...) asparagine). Cu cation contacts are provided by H118, H120, and H135. Zn(2+) contacts are provided by H135, H143, H146, and D149. H185 is a binding site for Cu cation. The tract at residues 221-244 is disordered; that stretch reads PWARQAQEHAERKKRRRESECKAA. The segment covering 226 to 244 has biased composition (basic and acidic residues); the sequence is AQEHAERKKRRRESECKAA.

The protein belongs to the Cu-Zn superoxide dismutase family. As to quaternary structure, homotetramer. Directly interacts with ATP7A; this interaction is copper-dependent and is required for SOD3 activity. The cofactor is Cu cation. Requires Zn(2+) as cofactor.

It is found in the secreted. It localises to the extracellular space. Its subcellular location is the golgi apparatus. The protein resides in the trans-Golgi network. It catalyses the reaction 2 superoxide + 2 H(+) = H2O2 + O2. Protect the extracellular space from toxic effect of reactive oxygen intermediates by converting superoxide radicals into hydrogen peroxide and oxygen. The chain is Extracellular superoxide dismutase [Cu-Zn] (SOD3) from Oryctolagus cuniculus (Rabbit).